The following is a 379-amino-acid chain: Chaperone protein DnaJ (379 aa).

One can recognise a J domain in the interval Asp4–Gly69. The segment at Gly137–Glu215 adopts a CR-type zinc-finger fold. Residues Cys150, Cys153, Cys167, Cys170, Cys189, Cys192, Cys203, and Cys206 each contribute to the Zn(2+) site. 4 CXXCXGXG motif repeats span residues Cys150–Gly157, Cys167–Gly174, Cys189–Gly196, and Cys203–Gly210.

It belongs to the DnaJ family. Homodimer. Requires Zn(2+) as cofactor.

It is found in the cytoplasm. Participates actively in the response to hyperosmotic and heat shock by preventing the aggregation of stress-denatured proteins and by disaggregating proteins, also in an autonomous, DnaK-independent fashion. Unfolded proteins bind initially to DnaJ; upon interaction with the DnaJ-bound protein, DnaK hydrolyzes its bound ATP, resulting in the formation of a stable complex. GrpE releases ADP from DnaK; ATP binding to DnaK triggers the release of the substrate protein, thus completing the reaction cycle. Several rounds of ATP-dependent interactions between DnaJ, DnaK and GrpE are required for fully efficient folding. Also involved, together with DnaK and GrpE, in the DNA replication of plasmids through activation of initiation proteins. The sequence is that of Chaperone protein DnaJ from Rhizobium meliloti (strain 1021) (Ensifer meliloti).